The chain runs to 214 residues: EEF1A lysine methyltransferase 1 (214 aa).

Position 2 is an N-acetylserine (S2). Phosphoserine is present on S2.

It belongs to the class I-like SAM-binding methyltransferase superfamily. EFM5 family.

It is found in the cytoplasm. The enzyme catalyses L-lysyl-[protein] + 3 S-adenosyl-L-methionine = N(6),N(6),N(6)-trimethyl-L-lysyl-[protein] + 3 S-adenosyl-L-homocysteine + 3 H(+). In terms of biological role, protein N-lysine methyltransferase that selectively catalyzes the trimethylation of EEF1A at 'Lys-79'. The sequence is that of EEF1A lysine methyltransferase 1 from Homo sapiens (Human).